Consider the following 253-residue polypeptide: Hydroxyacylglutathione hydrolase (253 aa).

The Zn(2+) site is built by His54, His56, Asp58, His59, His112, Asp131, and His169.

This sequence belongs to the metallo-beta-lactamase superfamily. Glyoxalase II family. Monomer. Zn(2+) is required as a cofactor.

It carries out the reaction an S-(2-hydroxyacyl)glutathione + H2O = a 2-hydroxy carboxylate + glutathione + H(+). The protein operates within secondary metabolite metabolism; methylglyoxal degradation; (R)-lactate from methylglyoxal: step 2/2. Functionally, thiolesterase that catalyzes the hydrolysis of S-D-lactoyl-glutathione to form glutathione and D-lactic acid. The protein is Hydroxyacylglutathione hydrolase of Bartonella tribocorum (strain CIP 105476 / IBS 506).